A 604-amino-acid polypeptide reads, in one-letter code: Prostaglandin G/H synthase 2 (604 aa).

The N-terminal stretch at 1 to 17 is a signal peptide; it reads MLARALLLCAVLALSHT. The region spanning 18–55 is the EGF-like domain; it reads ANPCCSHPCQNRGVCMSVGFDQYKCDCTRTGFYGENCS. 4 disulfide bridges follow: Cys21–Cys32, Cys22–Cys145, Cys26–Cys42, and Cys44–Cys54. A glycan (N-linked (GlcNAc...) asparagine) is linked at Asn53. Arg106 is a binding site for substrate. The N-linked (GlcNAc...) asparagine glycan is linked to Asn130. His193 functions as the Proton acceptor in the catalytic mechanism. A substrate-binding site is contributed by Tyr341. Catalysis depends on Tyr371, which acts as the For cyclooxygenase activity. His374 contacts heme b. Asn396 carries an N-linked (GlcNAc...) asparagine glycan. Position 526 is an S-nitrosocysteine (Cys526). Residues Cys555 and Cys561 are joined by a disulfide bond. Position 565 is an O-acetylserine (Ser565). An N-linked (GlcNAc...) asparagine glycan is attached at Asn580.

The protein belongs to the prostaglandin G/H synthase family. As to quaternary structure, homodimer. Heme b serves as cofactor. Post-translationally, S-nitrosylation by NOS2 (iNOS) activates enzyme activity. S-nitrosylation may take place on different Cys residues in addition to Cys-526. Acetylated at Ser-565 by SPHK1. During neuroinflammation, acetylation by SPHK1 promotes neuronal secretion of specialized preresolving mediators (SPMs), especially 15-R-lipoxin A4, which results in an increase of phagocytic microglia.

The protein resides in the microsome membrane. The protein localises to the endoplasmic reticulum membrane. Its subcellular location is the nucleus inner membrane. It is found in the nucleus outer membrane. The enzyme catalyses (5Z,8Z,11Z,14Z)-eicosatetraenoate + AH2 + 2 O2 = prostaglandin H2 + A + H2O. It carries out the reaction (5Z,8Z,11Z,14Z)-eicosatetraenoate + 2 O2 = prostaglandin G2. The catalysed reaction is prostaglandin G2 + AH2 = prostaglandin H2 + A + H2O. It catalyses the reaction (5Z,8Z,11Z,14Z,17Z)-eicosapentaenoate + 2 O2 = prostaglandin G3. The enzyme catalyses prostaglandin G3 + AH2 = prostaglandin H3 + A + H2O. It carries out the reaction (8Z,11Z,14Z)-eicosatrienoate + 2 O2 = prostaglandin G1. The catalysed reaction is prostaglandin G1 + AH2 = prostaglandin H1 + A + H2O. It catalyses the reaction 2-(5Z,8Z,11Z,14Z)-eicosatetraenoyl-sn-glycero-3-phosphoethanolamine + 2 O2 = 2-(prostaglandin G2)-sn-glycero-3-phosphoethanolamine. The enzyme catalyses 2-(prostaglandin G2)-sn-glycero-3-phosphoethanolamine + AH2 = 2-(prostaglandin H2)-sn-glycero-3-phosphoethanolamine + A + H2O. It carries out the reaction 2-(5Z,8Z,11Z,14Z)-eicosatetraenoyl-sn-glycero-3-phosphocholine + 2 O2 = 2-(prostaglandin G2)-sn-glycero-3-phosphocholine. The catalysed reaction is 2-(prostaglandin G2)-sn-glycero-3-phosphocholine + AH2 = 2-(prostaglandin H2)-sn-glycero-3-phosphocholine + A + H2O. It catalyses the reaction (15S)-hydroperoxy-(5Z,8Z,11Z,13E)-eicosatetraenoate + AH2 = (15S)-hydroxy-(5Z,8Z,11Z,13E)-eicosatetraenoate + A + H2O. The enzyme catalyses 2-(5Z,8Z,11Z,14Z)-eicosatetraenoyl-sn-glycero-3-phosphocholine + AH2 + O2 = 2-[(15S)-hydroxy-(5Z,8Z,11Z,13E)-eicosatetraenoyl]-sn-glycero-3-phosphocholine + A + H2O. It carries out the reaction 2-(5Z,8Z,11Z,14Z)-eicosatetraenoyl-sn-glycero-3-phosphocholine + AH2 + O2 = 2-[(15R)-hydroxy-(5Z,8Z,11Z,13E)-eicosatetraenoyl]-sn-glycero-3-phosphocholine + A + H2O. The catalysed reaction is 2-(5Z,8Z,11Z,14Z)-eicosatetraenoyl-sn-glycero-3-phosphocholine + AH2 + O2 = 2-[(11R)-hydroxy-(5Z,8Z,12E,14Z)-eicosatetraenoyl]-sn-glycero-3-phosphocholine + A + H2O. It catalyses the reaction (9Z,12Z)-octadecadienoate + AH2 + O2 = 9-hydroxy-(10E,12Z)-octadecadienoate + A + H2O. The enzyme catalyses (9Z,12Z)-octadecadienoate + AH2 + O2 = 13-hydroxy-(9Z,11E)-octadecadienoate + A + H2O. It carries out the reaction (5Z,8Z,11Z,14Z)-eicosatetraenoate + AH2 + O2 = (15R)-hydroxy-(5Z,8Z,11Z,13E)-eicosatetraenoate + A + H2O. The catalysed reaction is (5Z,8Z,11Z,14Z)-eicosatetraenoate + AH2 + O2 = (11R)-hydroxy-(5Z,8Z,12E,14Z)-eicosatetraenoate + A + H2O. It catalyses the reaction (5Z,8Z,11Z,14Z,17Z)-eicosapentaenoate + AH2 + O2 = (11R)-hydroxy-(5Z,8Z,12E,14Z,17Z)-eicosapentaenoate + A + H2O. The enzyme catalyses (5Z,8Z,11Z,14Z,17Z)-eicosapentaenoate + AH2 + O2 = (18S)-hydroxy-(5Z,8Z,11Z,14Z,16E)-eicosapentaenoate + A + H2O. It carries out the reaction (5Z,8Z,11Z,14Z,17Z)-eicosapentaenoate + AH2 + O2 = (18R)-hydroxy-(5Z,8Z,11Z,14Z,16E)-eicosapentaenoate + A + H2O. The catalysed reaction is (5Z,8Z,11Z,14Z,17Z)-eicosapentaenoate + AH2 + O2 = (15R)-hydroxy-(5Z,8Z,11Z,13E,17Z)-eicosapentaenoate + A + H2O. It catalyses the reaction (5Z,8Z,11Z,14Z,17Z)-eicosapentaenoate + AH2 + O2 = (15S)-hydroxy-(5Z,8Z,11Z,13E,17Z)-eicosapentaenoate + A + H2O. The enzyme catalyses (7Z,10Z,13Z,16Z,19Z)-docosapentaenoate + AH2 + O2 = 13R-hydroxy-(7Z,10Z,14E,16Z,19Z)-docosapentaenoate + A + H2O. It carries out the reaction (4Z,7Z,10Z,13Z,16Z,19Z)-docosahexaenoate + AH2 + O2 = 13-hydroxy-(4Z,7Z,10Z,14E,16Z,19Z)-docosahexaenoate + A + H2O. The catalysed reaction is (5S)-hydroxy-(6E,8Z,11Z,14Z)-eicosatetraenoate + AH2 + O2 = (5S,15R)-dihydroxy-(6E,8Z,11Z,13E)-eicosatetraenoate + A + H2O. It catalyses the reaction (4Z,7Z,10Z,13Z,16Z,19Z)-docosahexaenoate + AH2 + O2 = 17R-hydroxy-(4Z,7Z,10Z,13Z,15E,19Z)-docosahexaenoate + A + H2O. The enzyme catalyses (5S)-hydroxy-(6E,8Z,11Z,14Z)-eicosatetraenoate + AH2 + O2 = (5S,15S)-dihydroxy-(6E,8Z,11Z,13E)-eicosatetraenoate + A + H2O. It carries out the reaction (5S)-hydroxy-(6E,8Z,11Z,14Z)-eicosatetraenoate + AH2 + O2 = (5S,11R)-dihydroxy-(6E,8Z,12E,14Z)-eicosatetraenoate + A + H2O. The catalysed reaction is 2-(5Z,8Z,11Z,14Z-eicosatetraenoyl)-glycerol + 2 O2 = 2-glyceryl-prostaglandin G2. It catalyses the reaction 2-glyceryl-prostaglandin G2 + AH2 = 2-glyceryl-prostaglandin H2 + A + H2O. The enzyme catalyses (5Z,8Z,11Z,14Z)-eicosatetraenoate + O2 = (15R)-hydroperoxy-(5Z,8Z,11Z,13E)-eicosatetraenoate. It carries out the reaction (5Z,8Z,11Z,14Z)-eicosatetraenoate + O2 = 11R-hydroperoxy-(5Z,8Z,12E,14Z)-eicosatetraenoate. The catalysed reaction is (9Z,12Z)-octadecadienoate + AH2 + O2 = (9R)-hydroxy-(10E,12Z)-octadecadienoate + A + H2O. It catalyses the reaction (9Z,12Z)-octadecadienoate + AH2 + O2 = (9S)-hydroxy-(10E,12Z)-octadecadienoate + A + H2O. The enzyme catalyses (9Z,12Z)-octadecadienoate + AH2 + O2 = (13S)-hydroxy-(9Z,11E)-octadecadienoate + A + H2O. It carries out the reaction (9Z,12Z)-octadecadienoate + AH2 + O2 = (13R)-hydroxy-(9Z,11E)-octadecadienoate + A + H2O. The protein operates within lipid metabolism; prostaglandin biosynthesis. With respect to regulation, the cyclooxygenase activity is inhibited by nonsteroidal anti-inflammatory drugs (NSAIDs) including aspirin, ibuprofen, flurbiprofen, celecoxib, flufenamic, mefenamic and tolfenamic acids as well as by hydroperoxide scavenger erythrocyte glutathione peroxidase GPX1. Aspirin triggers enzyme acetylation turning off its ability to generate pro-inflammatory prostaglandins, but switches on its capacity to produce anti-inflammatory lipid mediators involved in inflammation resolution. Aspirin enhances lipoxygenase-type activity toward production of epimers with R stereochemistry such as 15R-HETE, 18R-HEPE, 15R-HEPE and 17R-HDHA. Atorvastatin, a cholesterol-lowering drug, triggers enzyme S-nitrosylation increasing production of 13-series resolvins (RvTs). Dual cyclooxygenase and peroxidase in the biosynthesis pathway of prostanoids, a class of C20 oxylipins mainly derived from arachidonate ((5Z,8Z,11Z,14Z)-eicosatetraenoate, AA, C20:4(n-6)), with a particular role in the inflammatory response. The cyclooxygenase activity oxygenates AA to the hydroperoxy endoperoxide prostaglandin G2 (PGG2), and the peroxidase activity reduces PGG2 to the hydroxy endoperoxide prostaglandin H2 (PGH2), the precursor of all 2-series prostaglandins and thromboxanes. This complex transformation is initiated by abstraction of hydrogen at carbon 13 (with S-stereochemistry), followed by insertion of molecular O2 to form the endoperoxide bridge between carbon 9 and 11 that defines prostaglandins. The insertion of a second molecule of O2 (bis-oxygenase activity) yields a hydroperoxy group in PGG2 that is then reduced to PGH2 by two electrons. Similarly catalyzes successive cyclooxygenation and peroxidation of dihomo-gamma-linoleate (DGLA, C20:3(n-6)) and eicosapentaenoate (EPA, C20:5(n-3)) to corresponding PGH1 and PGH3, the precursors of 1- and 3-series prostaglandins. In an alternative pathway of prostanoid biosynthesis, converts 2-arachidonoyl lysophopholipids to prostanoid lysophopholipids, which are then hydrolyzed by intracellular phospholipases to release free prostanoids. Metabolizes 2-arachidonoyl glycerol yielding the glyceryl ester of PGH2, a process that can contribute to pain response. Generates lipid mediators from n-3 and n-6 polyunsaturated fatty acids (PUFAs) via a lipoxygenase-type mechanism. Oxygenates PUFAs to hydroperoxy compounds and then reduces them to corresponding alcohols. Plays a role in the generation of resolution phase interaction products (resolvins) during both sterile and infectious inflammation. Metabolizes docosahexaenoate (DHA, C22:6(n-3)) to 17R-HDHA, a precursor of the D-series resolvins (RvDs). As a component of the biosynthetic pathway of E-series resolvins (RvEs), converts eicosapentaenoate (EPA, C20:5(n-3)) primarily to 18S-HEPE that is further metabolized by ALOX5 and LTA4H to generate 18S-RvE1 and 18S-RvE2. In vascular endothelial cells, converts docosapentaenoate (DPA, C22:5(n-3)) to 13R-HDPA, a precursor for 13-series resolvins (RvTs) shown to activate macrophage phagocytosis during bacterial infection. In activated leukocytes, contributes to oxygenation of hydroxyeicosatetraenoates (HETE) to diHETES (5,15-diHETE and 5,11-diHETE). Can also use linoleate (LA, (9Z,12Z)-octadecadienoate, C18:2(n-6)) as substrate and produce hydroxyoctadecadienoates (HODEs) in a regio- and stereospecific manner, being (9R)-HODE ((9R)-hydroxy-(10E,12Z)-octadecadienoate) and (13S)-HODE ((13S)-hydroxy-(9Z,11E)-octadecadienoate) its major products. During neuroinflammation, plays a role in neuronal secretion of specialized preresolving mediators (SPMs) 15R-lipoxin A4 that regulates phagocytic microglia. This Homo sapiens (Human) protein is Prostaglandin G/H synthase 2.